Consider the following 134-residue polypeptide: Profilin-3 (134 aa).

A disulfide bridge connects residues Cys-13 and Cys-118. Residues 84–100 (AVIRGKKGSGGITIKKT) carry the Involved in PIP2 interaction motif. Position 114 is a phosphothreonine (Thr-114).

Belongs to the profilin family. As to quaternary structure, occurs in many kinds of cells as a complex with monomeric actin in a 1:1 ratio. In terms of processing, phosphorylated by MAP kinases.

It localises to the cytoplasm. The protein localises to the cytoskeleton. Binds to actin and affects the structure of the cytoskeleton. At high concentrations, profilin prevents the polymerization of actin, whereas it enhances it at low concentrations. This is Profilin-3 from Olea europaea (Common olive).